An 88-amino-acid polypeptide reads, in one-letter code: Protein A19 homolog (88 aa).

Residues Met-1–Val-28 form a disordered region.

It belongs to the chordopoxvirinae A19 family.

The sequence is that of Protein A19 homolog from Fowlpox virus (strain NVSL) (FPV).